We begin with the raw amino-acid sequence, 661 residues long: uncharacterized protein (661 aa).

A signal peptide spans 1–24 (MKTLKTLKIFIIVFIASVSLASFA). 6 helical membrane-spanning segments follow: residues 226 to 246 (IIGA…ALNT), 254 to 274 (IALF…LGPL), 410 to 430 (IILA…LYFI), 436 to 456 (CMIT…MALF), 469 to 489 (VCIS…LLIT), and 562 to 582 (VVSI…FYYF). The interval 629-661 (GKPLVGDKPGVGGKRKEGEQQGGDLASGSGGGK) is disordered.

It belongs to the TrbL/VirB6 family.

It is found in the cell membrane. This is an uncharacterized protein from Rickettsia conorii (strain ATCC VR-613 / Malish 7).